Reading from the N-terminus, the 310-residue chain is Probable cobalamin biosynthesis protein CobD (310 aa).

Helical transmembrane passes span 53–73 (LVFG…IFFT), 80–100 (LISN…FSIG), 157–177 (DSII…AFIY), 215–235 (IAGI…VPAI), and 289–309 (AVDY…FNLI).

This sequence belongs to the CobD/CbiB family.

It localises to the cell membrane. It functions in the pathway cofactor biosynthesis; adenosylcobalamin biosynthesis. Converts cobyric acid to cobinamide by the addition of aminopropanol on the F carboxylic group. This Methanococcus vannielii (strain ATCC 35089 / DSM 1224 / JCM 13029 / OCM 148 / SB) protein is Probable cobalamin biosynthesis protein CobD.